A 312-amino-acid polypeptide reads, in one-letter code: Beta-ketoacyl-[acyl-carrier-protein] synthase III (312 aa).

Active-site residues include Cys-112 and His-237. Positions 238–242 (QANIR) are ACP-binding. Residue Asn-267 is part of the active site.

Belongs to the thiolase-like superfamily. FabH family. Homodimer.

It is found in the cytoplasm. It catalyses the reaction malonyl-[ACP] + acetyl-CoA + H(+) = 3-oxobutanoyl-[ACP] + CO2 + CoA. Its pathway is lipid metabolism; fatty acid biosynthesis. In terms of biological role, catalyzes the condensation reaction of fatty acid synthesis by the addition to an acyl acceptor of two carbons from malonyl-ACP. Catalyzes the first condensation reaction which initiates fatty acid synthesis and may therefore play a role in governing the total rate of fatty acid production. Possesses both acetoacetyl-ACP synthase and acetyl transacylase activities. Its substrate specificity determines the biosynthesis of branched-chain and/or straight-chain of fatty acids. In Listeria innocua serovar 6a (strain ATCC BAA-680 / CLIP 11262), this protein is Beta-ketoacyl-[acyl-carrier-protein] synthase III.